A 377-amino-acid polypeptide reads, in one-letter code: 4-hydroxy-3-methylbut-2-en-1-yl diphosphate synthase (flavodoxin) (377 aa).

Residues Cys-275, Cys-278, Cys-310, and Glu-317 each contribute to the [4Fe-4S] cluster site.

It belongs to the IspG family. The cofactor is [4Fe-4S] cluster.

The enzyme catalyses (2E)-4-hydroxy-3-methylbut-2-enyl diphosphate + oxidized [flavodoxin] + H2O + 2 H(+) = 2-C-methyl-D-erythritol 2,4-cyclic diphosphate + reduced [flavodoxin]. It functions in the pathway isoprenoid biosynthesis; isopentenyl diphosphate biosynthesis via DXP pathway; isopentenyl diphosphate from 1-deoxy-D-xylulose 5-phosphate: step 5/6. Its function is as follows. Converts 2C-methyl-D-erythritol 2,4-cyclodiphosphate (ME-2,4cPP) into 1-hydroxy-2-methyl-2-(E)-butenyl 4-diphosphate. This chain is 4-hydroxy-3-methylbut-2-en-1-yl diphosphate synthase (flavodoxin), found in Ruegeria sp. (strain TM1040) (Silicibacter sp.).